The following is a 226-amino-acid chain: UPF0173 metal-dependent hydrolase SRU_1937 (226 aa).

It belongs to the UPF0173 family.

The chain is UPF0173 metal-dependent hydrolase SRU_1937 from Salinibacter ruber (strain DSM 13855 / M31).